A 662-amino-acid chain; its full sequence is UvrABC system protein B (662 aa).

In terms of domain architecture, Helicase ATP-binding spans 25-182; it reads KGIEKGEKFQ…KKLVEIQYER (158 aa). 38–45 provides a ligand contact to ATP; the sequence is GVTGSGKT. Residues 91-114 carry the Beta-hairpin motif; it reads YYDYYQPEAYVAQSDTYIEKDASI. Positions 429 to 595 constitute a Helicase C-terminal domain; the sequence is QIDDLYTSIQ…TIIKDIREVI (167 aa). Residues 622–657 enclose the UVR domain; sequence DKLIEKYEEEMREAAQNLQFEKAAHLRDVIYKLKRD.

Belongs to the UvrB family. Forms a heterotetramer with UvrA during the search for lesions. Interacts with UvrC in an incision complex.

It localises to the cytoplasm. Functionally, the UvrABC repair system catalyzes the recognition and processing of DNA lesions. A damage recognition complex composed of 2 UvrA and 2 UvrB subunits scans DNA for abnormalities. Upon binding of the UvrA(2)B(2) complex to a putative damaged site, the DNA wraps around one UvrB monomer. DNA wrap is dependent on ATP binding by UvrB and probably causes local melting of the DNA helix, facilitating insertion of UvrB beta-hairpin between the DNA strands. Then UvrB probes one DNA strand for the presence of a lesion. If a lesion is found the UvrA subunits dissociate and the UvrB-DNA preincision complex is formed. This complex is subsequently bound by UvrC and the second UvrB is released. If no lesion is found, the DNA wraps around the other UvrB subunit that will check the other stand for damage. The polypeptide is UvrABC system protein B (Clostridium botulinum (strain 657 / Type Ba4)).